A 251-amino-acid chain; its full sequence is Methylthioribulose-1-phosphate dehydratase (251 aa).

A disordered region spans residues 1–26 (MTSVCDATNEDKENGSESTESQDKEH). Basic and acidic residues predominate over residues 9–26 (NEDKENGSESTESQDKEH). Residue Cys100 participates in substrate binding. 2 residues coordinate Zn(2+): His118 and His120. Glu142 functions as the Proton donor/acceptor in the catalytic mechanism. Residue His198 coordinates Zn(2+). The disordered stretch occupies residues 232–251 (MDPSAPPIEENHYYDVQQSQ).

It belongs to the aldolase class II family. MtnB subfamily. The cofactor is Zn(2+).

Its subcellular location is the cytoplasm. The catalysed reaction is 5-(methylsulfanyl)-D-ribulose 1-phosphate = 5-methylsulfanyl-2,3-dioxopentyl phosphate + H2O. Its pathway is amino-acid biosynthesis; L-methionine biosynthesis via salvage pathway; L-methionine from S-methyl-5-thio-alpha-D-ribose 1-phosphate: step 2/6. Catalyzes the dehydration of methylthioribulose-1-phosphate (MTRu-1-P) into 2,3-diketo-5-methylthiopentyl-1-phosphate (DK-MTP-1-P). Functions in the methionine salvage pathway. May play a role in apoptosis. This is Methylthioribulose-1-phosphate dehydratase from Salmo salar (Atlantic salmon).